The chain runs to 660 residues: Bifunctional polymyxin resistance protein ArnA (660 aa).

The interval 1–304 (MKTVVFAYHD…MLGLVQGSRL (304 aa)) is formyltransferase ArnAFT. Residue 86–88 (HLI) coordinates (6R)-10-formyltetrahydrofolate. Histidine 104 acts as the Proton donor; for formyltransferase activity in catalysis. Residues arginine 114 and 136 to 140 (VKRAD) contribute to the (6R)-10-formyltetrahydrofolate site. The dehydrogenase ArnADH stretch occupies residues 314 to 660 (RRTRVLILGV…RTVDLTDKPS (347 aa)). NAD(+)-binding positions include aspartate 347 and 368-369 (DI). UDP-alpha-D-glucuronate-binding positions include alanine 393, tyrosine 398, and 432–433 (TS). The active-site Proton acceptor; for decarboxylase activity is glutamate 434. UDP-alpha-D-glucuronate-binding positions include arginine 460, asparagine 492, 526 to 535 (KLIDGGKQKR), and tyrosine 613. Arginine 619 serves as the catalytic Proton donor; for decarboxylase activity.

The protein in the N-terminal section; belongs to the Fmt family. UDP-L-Ara4N formyltransferase subfamily. In the C-terminal section; belongs to the NAD(P)-dependent epimerase/dehydratase family. UDP-glucuronic acid decarboxylase subfamily. Homohexamer, formed by a dimer of trimers.

It catalyses the reaction UDP-alpha-D-glucuronate + NAD(+) = UDP-beta-L-threo-pentopyranos-4-ulose + CO2 + NADH. The enzyme catalyses UDP-4-amino-4-deoxy-beta-L-arabinose + (6R)-10-formyltetrahydrofolate = UDP-4-deoxy-4-formamido-beta-L-arabinose + (6S)-5,6,7,8-tetrahydrofolate + H(+). The protein operates within nucleotide-sugar biosynthesis; UDP-4-deoxy-4-formamido-beta-L-arabinose biosynthesis; UDP-4-deoxy-4-formamido-beta-L-arabinose from UDP-alpha-D-glucuronate: step 1/3. It functions in the pathway nucleotide-sugar biosynthesis; UDP-4-deoxy-4-formamido-beta-L-arabinose biosynthesis; UDP-4-deoxy-4-formamido-beta-L-arabinose from UDP-alpha-D-glucuronate: step 3/3. It participates in bacterial outer membrane biogenesis; lipopolysaccharide biosynthesis. Functionally, bifunctional enzyme that catalyzes the oxidative decarboxylation of UDP-glucuronic acid (UDP-GlcUA) to UDP-4-keto-arabinose (UDP-Ara4O) and the addition of a formyl group to UDP-4-amino-4-deoxy-L-arabinose (UDP-L-Ara4N) to form UDP-L-4-formamido-arabinose (UDP-L-Ara4FN). The modified arabinose is attached to lipid A and is required for resistance to polymyxin and cationic antimicrobial peptides. The polypeptide is Bifunctional polymyxin resistance protein ArnA (Shigella flexneri serotype 5b (strain 8401)).